Reading from the N-terminus, the 290-residue chain is Pyridoxal kinase PdxY (290 aa).

Residues serine 9 and 44-45 (TQ) contribute to the substrate site. Aspartate 112, valine 144, glutamate 149, and lysine 182 together coordinate ATP. Aspartate 221 is a binding site for substrate.

It belongs to the pyridoxine kinase family. PdxY subfamily. In terms of assembly, homodimer. Mg(2+) serves as cofactor.

The enzyme catalyses pyridoxal + ATP = pyridoxal 5'-phosphate + ADP + H(+). It functions in the pathway cofactor metabolism; pyridoxal 5'-phosphate salvage; pyridoxal 5'-phosphate from pyridoxal: step 1/1. Pyridoxal kinase involved in the salvage pathway of pyridoxal 5'-phosphate (PLP). Catalyzes the phosphorylation of pyridoxal to PLP. In Vibrio vulnificus (strain CMCP6), this protein is Pyridoxal kinase PdxY.